We begin with the raw amino-acid sequence, 459 residues long: Biphenyl dioxygenase subunit alpha (459 aa).

In terms of domain architecture, Rieske spans 58 to 156; it reads WLLLGHESHV…KEGDCGFDKA (99 aa). [2Fe-2S] cluster-binding residues include cysteine 100, histidine 102, cysteine 120, and histidine 123. Fe cation-binding residues include histidine 233 and histidine 239.

The protein belongs to the bacterial ring-hydroxylating dioxygenase alpha subunit family. Heterohexamer consisting of three BphA subunits and three BphE subunits. A ferredoxin (BphF) and a ferredoxin reductase (BphG) must be present to obtain activity. It depends on [2Fe-2S] cluster as a cofactor. Requires Fe cation as cofactor.

It catalyses the reaction biphenyl + NADH + O2 + H(+) = (2R,3S)-3-phenylcyclohexa-3,5-diene-1,2-diol + NAD(+). It participates in xenobiotic degradation; biphenyl degradation; 2-hydroxy-2,4-pentadienoate and benzoate from biphenyl: step 1/4. The sequence is that of Biphenyl dioxygenase subunit alpha (bphA) from Paraburkholderia xenovorans (strain LB400).